The sequence spans 129 residues: Small ribosomal subunit protein uS12 (129 aa).

Aspartate 89 is subject to 3-methylthioaspartic acid. Positions 101-129 (TLDTSGVSDRKQSRSKYGAKQPKAVAAKK) are disordered.

Belongs to the universal ribosomal protein uS12 family. In terms of assembly, part of the 30S ribosomal subunit. Contacts proteins S8 and S17. May interact with IF1 in the 30S initiation complex.

Its function is as follows. With S4 and S5 plays an important role in translational accuracy. Functionally, interacts with and stabilizes bases of the 16S rRNA that are involved in tRNA selection in the A site and with the mRNA backbone. Located at the interface of the 30S and 50S subunits, it traverses the body of the 30S subunit contacting proteins on the other side and probably holding the rRNA structure together. The combined cluster of proteins S8, S12 and S17 appears to hold together the shoulder and platform of the 30S subunit. This Chlorobium luteolum (strain DSM 273 / BCRC 81028 / 2530) (Pelodictyon luteolum) protein is Small ribosomal subunit protein uS12.